A 275-amino-acid chain; its full sequence is Lectin (275 aa).

Positions 1–30 (MASLQTQMISFYLIFLSILLTTIFFFKVNS) are cleaved as a signal peptide. Asp-111 and Gly-129 together coordinate D-glucose. Mn(2+) contacts are provided by Glu-149 and Asp-151. Ca(2+) is bound by residues Asp-151, Phe-153, Asn-155, and Asp-159. Mn(2+)-binding residues include Asp-159 and His-166. The propeptide occupies 211–217 (NSLEEEN). D-glucose is bound by residues Gly-246 and Ala-247. Residues 270–275 (KQAADA) constitute a propeptide that is removed on maturation.

The protein belongs to the leguminous lectin family. Heterotetramer of two alpha and two beta chains. Post-translationally, the mature form consists of two chains, alpha and beta, produced by cleavage of the immature protein. These remain cleaved, yet fold together to form one subunit.

In terms of biological role, D-mannose specific lectin. This is Lectin from Lens culinaris subsp. tomentosus (Lentil).